The primary structure comprises 382 residues: MNEVYVFTSESVSEGHPDKIADQISDAILDAILAQDPKARVACEVLVKTGMVLVGGEITTKAWVDVEDITRHVIKDIGYNSSQMGFDWESCAVLSAIGKQSPDIAQGVDNQQTKILGAGDQGLMFGYASRETDVFMPAPIAYAHRLMEKLAKARKSGQLPWLRPDAKCQLTLKYEQGMPVEVDTVVFSTQHSPDIEHKDLVEAIREEIIKSVLPAEWLNDKTRYFINPTGRFVIGGPLGDCGLTGRKIIVDTYGGMARHGGGCFSGKDPSKVDRSAAYAARHVAKNIVAAGLADKCELQISYAIGVAEPTSIFVDTFGTGRLKNSEIIDLIHTHFDLTPQGIIDQHDLLRPIYRQTATYGHYGRESFPWERLDKVAELSKAL.

His-16 provides a ligand contact to ATP. Asp-18 is a binding site for Mg(2+). A K(+)-binding site is contributed by Glu-44. L-methionine is bound by residues Glu-57 and Gln-100. Residues 100 to 110 are flexible loop; that stretch reads QSPDIAQGVDN. Residues 165 to 167, 231 to 232, Asp-240, 246 to 247, and Lys-267 each bind ATP; these read DAK, RF, and RK. An L-methionine-binding site is contributed by Asp-240. Lys-271 contacts L-methionine.

It belongs to the AdoMet synthase family. Homotetramer; dimer of dimers. Requires Mg(2+) as cofactor. K(+) serves as cofactor.

The protein localises to the cytoplasm. It carries out the reaction L-methionine + ATP + H2O = S-adenosyl-L-methionine + phosphate + diphosphate. It participates in amino-acid biosynthesis; S-adenosyl-L-methionine biosynthesis; S-adenosyl-L-methionine from L-methionine: step 1/1. Its function is as follows. Catalyzes the formation of S-adenosylmethionine (AdoMet) from methionine and ATP. The overall synthetic reaction is composed of two sequential steps, AdoMet formation and the subsequent tripolyphosphate hydrolysis which occurs prior to release of AdoMet from the enzyme. In Legionella pneumophila (strain Lens), this protein is S-adenosylmethionine synthase.